Consider the following 196-residue polypeptide: Ribonuclease HII (196 aa).

Residues 13–196 (LLVAGVDEAG…SFSPLKKKLF (184 aa)) form the RNase H type-2 domain. Asp19, Glu20, and Asp111 together coordinate a divalent metal cation.

It belongs to the RNase HII family. Requires Mn(2+) as cofactor. Mg(2+) is required as a cofactor.

It localises to the cytoplasm. It catalyses the reaction Endonucleolytic cleavage to 5'-phosphomonoester.. Its function is as follows. Endonuclease that specifically degrades the RNA of RNA-DNA hybrids. The sequence is that of Ribonuclease HII (rnhB) from Aquifex aeolicus (strain VF5).